Consider the following 393-residue polypeptide: UDP-N-acetylglucosamine--N-acetylmuramyl-(pentapeptide) pyrophosphoryl-undecaprenol N-acetylglucosamine transferase (393 aa).

UDP-N-acetyl-alpha-D-glucosamine contacts are provided by residues 14-16, Asn128, Arg170, Ser210, and Gln321; that span reads TAG.

It belongs to the glycosyltransferase 28 family. MurG subfamily.

The protein localises to the cell membrane. The enzyme catalyses di-trans,octa-cis-undecaprenyl diphospho-N-acetyl-alpha-D-muramoyl-L-alanyl-D-glutamyl-meso-2,6-diaminopimeloyl-D-alanyl-D-alanine + UDP-N-acetyl-alpha-D-glucosamine = di-trans,octa-cis-undecaprenyl diphospho-[N-acetyl-alpha-D-glucosaminyl-(1-&gt;4)]-N-acetyl-alpha-D-muramoyl-L-alanyl-D-glutamyl-meso-2,6-diaminopimeloyl-D-alanyl-D-alanine + UDP + H(+). Its pathway is cell wall biogenesis; peptidoglycan biosynthesis. Functionally, cell wall formation. Catalyzes the transfer of a GlcNAc subunit on undecaprenyl-pyrophosphoryl-MurNAc-pentapeptide (lipid intermediate I) to form undecaprenyl-pyrophosphoryl-MurNAc-(pentapeptide)GlcNAc (lipid intermediate II). The polypeptide is UDP-N-acetylglucosamine--N-acetylmuramyl-(pentapeptide) pyrophosphoryl-undecaprenol N-acetylglucosamine transferase (Bifidobacterium adolescentis (strain ATCC 15703 / DSM 20083 / NCTC 11814 / E194a)).